Consider the following 730-residue polypeptide: Catalase-peroxidase 1 (730 aa).

Residues 92-217 (WHSAGTYRTT…LGAAVMGLIY (126 aa)) constitute a cross-link (tryptophyl-tyrosyl-methioninium (Trp-Tyr) (with M-243)). The active-site Proton acceptor is His-93. The segment at residues 217-243 (YVDPEGPNGNPDPLASAENIRESFGRM) is a cross-link (tryptophyl-tyrosyl-methioninium (Tyr-Met) (with W-92)). His-258 provides a ligand contact to heme b.

It belongs to the peroxidase family. Peroxidase/catalase subfamily. Homodimer or homotetramer. Heme b serves as cofactor. In terms of processing, formation of the three residue Trp-Tyr-Met cross-link is important for the catalase, but not the peroxidase activity of the enzyme.

It carries out the reaction H2O2 + AH2 = A + 2 H2O. It catalyses the reaction 2 H2O2 = O2 + 2 H2O. Its function is as follows. Bifunctional enzyme with both catalase and broad-spectrum peroxidase activity. This Haloarcula marismortui (strain ATCC 43049 / DSM 3752 / JCM 8966 / VKM B-1809) (Halobacterium marismortui) protein is Catalase-peroxidase 1.